Reading from the N-terminus, the 498-residue chain is ATP synthase subunit beta, chloroplastic (498 aa).

Residue T6 is modified to Phosphothreonine. S13 is subject to Phosphoserine. 172–179 (GGAGVGKT) is an ATP binding site.

This sequence belongs to the ATPase alpha/beta chains family. In terms of assembly, F-type ATPases have 2 components, CF(1) - the catalytic core - and CF(0) - the membrane proton channel. CF(1) has five subunits: alpha(3), beta(3), gamma(1), delta(1), epsilon(1). CF(0) has four main subunits: a(1), b(1), b'(1) and c(9-12).

It is found in the plastid. The protein localises to the chloroplast thylakoid membrane. It carries out the reaction ATP + H2O + 4 H(+)(in) = ADP + phosphate + 5 H(+)(out). Produces ATP from ADP in the presence of a proton gradient across the membrane. The catalytic sites are hosted primarily by the beta subunits. This Nasturtium officinale (Watercress) protein is ATP synthase subunit beta, chloroplastic.